A 145-amino-acid chain; its full sequence is UPF0201 protein STK_09490 (145 aa).

Belongs to the UPF0201 family.

In Sulfurisphaera tokodaii (strain DSM 16993 / JCM 10545 / NBRC 100140 / 7) (Sulfolobus tokodaii), this protein is UPF0201 protein STK_09490.